The sequence spans 317 residues: MPKPGVFNFVNKATWDARNALGSLPKETARKNYVDLVSSLSSSSEAPSQGKRGADEKARESKDILVTSEDGITKITFNRPTKKNAISFQMYLDIMHALKNASTDNSVITVFTGTGDYYSSGNDLKNLINDAGEIQDVVATSTKILREFVNCFIDFPKPLVAVVNGPAVGIAVTILALFDAVFASDRATFHTPFSQLSQIPEACSTYMFPKIMGPTKAAEMLLFGKKLTAREAWAQGLVTEVFPESTFETEVWTRLKTYSKLSPNVMRISKELIRKHEKQKLYTVNAEECAAALERMPREEYAKALRNFLFRKAKAKL.

Residues 1–46 (MPKPGVFNFVNKATWDARNALGSLPKETARKNYVDLVSSLSSSSEA) form the ACB domain. The tract at residues 40-60 (LSSSSEAPSQGKRGADEKARE) is disordered. 120-124 (SGNDL) lines the substrate pocket. Residues 315 to 317 (AKL) carry the Microbody targeting signal motif.

The protein belongs to the enoyl-CoA hydratase/isomerase family. As to expression, expressed at high levels in the kidney. Also detected at very low levels in the duodenum, jejunum, ileum, heart, liver, lung, and brown adipose tissue (at protein level). In the kidney, expression seems to be localized mainly to the proximal tubule.

It is found in the peroxisome. The enzyme catalyses a (3Z)-enoyl-CoA = a 4-saturated (2E)-enoyl-CoA. The catalysed reaction is a (3E)-enoyl-CoA = a 4-saturated (2E)-enoyl-CoA. It carries out the reaction (3E)-nonenoyl-CoA = (2E)-nonenoyl-CoA. Its function is as follows. Catalyzes the isomerization of trans-3-nonenoyl-CoA into trans-2-nonenoyl-CoA. May also have activity towards other enoyl-CoA species. In Mus musculus (Mouse), this protein is Enoyl-CoA delta isomerase 3, peroxisomal.